Reading from the N-terminus, the 131-residue chain is D-ribose pyranase (131 aa).

Catalysis depends on His-20, which acts as the Proton donor. Substrate contacts are provided by residues Asp-28, His-98, and 120–122; that span reads FSN.

It belongs to the RbsD / FucU family. RbsD subfamily. As to quaternary structure, homodecamer.

Its subcellular location is the cytoplasm. It carries out the reaction beta-D-ribopyranose = beta-D-ribofuranose. It functions in the pathway carbohydrate metabolism; D-ribose degradation; D-ribose 5-phosphate from beta-D-ribopyranose: step 1/2. In terms of biological role, catalyzes the interconversion of beta-pyran and beta-furan forms of D-ribose. This chain is D-ribose pyranase, found in Lactobacillus acidophilus (strain ATCC 700396 / NCK56 / N2 / NCFM).